Here is a 99-residue protein sequence, read N- to C-terminus: Aspartyl/glutamyl-tRNA(Asn/Gln) amidotransferase subunit C (99 aa).

The protein belongs to the GatC family. Heterotrimer of A, B and C subunits.

It catalyses the reaction L-glutamyl-tRNA(Gln) + L-glutamine + ATP + H2O = L-glutaminyl-tRNA(Gln) + L-glutamate + ADP + phosphate + H(+). The enzyme catalyses L-aspartyl-tRNA(Asn) + L-glutamine + ATP + H2O = L-asparaginyl-tRNA(Asn) + L-glutamate + ADP + phosphate + 2 H(+). Its function is as follows. Allows the formation of correctly charged Asn-tRNA(Asn) or Gln-tRNA(Gln) through the transamidation of misacylated Asp-tRNA(Asn) or Glu-tRNA(Gln) in organisms which lack either or both of asparaginyl-tRNA or glutaminyl-tRNA synthetases. The reaction takes place in the presence of glutamine and ATP through an activated phospho-Asp-tRNA(Asn) or phospho-Glu-tRNA(Gln). This is Aspartyl/glutamyl-tRNA(Asn/Gln) amidotransferase subunit C from Polaromonas naphthalenivorans (strain CJ2).